We begin with the raw amino-acid sequence, 173 residues long: NADH-ubiquinone oxidoreductase chain 6 (173 aa).

5 helical membrane passes run 1 to 21 (MTYF…AVAS), 27 to 47 (YGVV…LSLG), 48 to 68 (VSFV…VVFV), 87 to 107 (VVGY…VGGL), and 139 to 159 (CGVG…FVVL).

It belongs to the complex I subunit 6 family.

The protein localises to the mitochondrion membrane. It catalyses the reaction a ubiquinone + NADH + 5 H(+)(in) = a ubiquinol + NAD(+) + 4 H(+)(out). Functionally, core subunit of the mitochondrial membrane respiratory chain NADH dehydrogenase (Complex I) that is believed to belong to the minimal assembly required for catalysis. Complex I functions in the transfer of electrons from NADH to the respiratory chain. The immediate electron acceptor for the enzyme is believed to be ubiquinone. The chain is NADH-ubiquinone oxidoreductase chain 6 (MT-ND6) from Synthliboramphus wumizusume (Japanese murrelet).